The primary structure comprises 614 residues: tRNA uridine 5-carboxymethylaminomethyl modification enzyme MnmG (614 aa).

10–15 provides a ligand contact to FAD; sequence GAGHAG. Residue 271 to 285 participates in NAD(+) binding; it reads GPRYCPSIEDKIVKF.

It belongs to the MnmG family. In terms of assembly, homodimer. Heterotetramer of two MnmE and two MnmG subunits. It depends on FAD as a cofactor.

The protein resides in the cytoplasm. Its function is as follows. NAD-binding protein involved in the addition of a carboxymethylaminomethyl (cmnm) group at the wobble position (U34) of certain tRNAs, forming tRNA-cmnm(5)s(2)U34. The polypeptide is tRNA uridine 5-carboxymethylaminomethyl modification enzyme MnmG (Ureaplasma urealyticum serovar 10 (strain ATCC 33699 / Western)).